The primary structure comprises 250 residues: 5-oxoprolinase subunit A 2 (250 aa).

This sequence belongs to the LamB/PxpA family. As to quaternary structure, forms a complex composed of PxpA, PxpB and PxpC.

It carries out the reaction 5-oxo-L-proline + ATP + 2 H2O = L-glutamate + ADP + phosphate + H(+). In terms of biological role, catalyzes the cleavage of 5-oxoproline to form L-glutamate coupled to the hydrolysis of ATP to ADP and inorganic phosphate. The sequence is that of 5-oxoprolinase subunit A 2 from Bordetella bronchiseptica (strain ATCC BAA-588 / NCTC 13252 / RB50) (Alcaligenes bronchisepticus).